The primary structure comprises 153 residues: Troponin C (153 aa).

EF-hand domains are found at residues 9–44, 45–80, 85–120, and 121–153; these read EQVQ…LGQT, FEEN…FLVE, AMQE…LDDK, and LTED…MTGD. Ca(2+) contacts are provided by D58, D60, S62, E64, and E69. The Ca(2+) site is built by D134, D136, S138, T140, and E145.

This sequence belongs to the troponin C family.

Functionally, troponin is the central regulatory protein of striated muscle contraction. Tn consists of three components: Tn-I which is the inhibitor of actomyosin ATPase, Tn-T which contains the binding site for tropomyosin and Tn-C. The binding of calcium to Tn-C abolishes the inhibitory action of Tn on actin filaments. This chain is Troponin C, found in Tyrophagus putrescentiae (Mold mite).